A 409-amino-acid chain; its full sequence is Argininosuccinate synthase (409 aa).

ATP is bound by residues 12–20 and A39; that span reads AYSGGLDTS. 2 residues coordinate L-citrulline: Y90 and S95. G120 serves as a coordination point for ATP. Positions 122, 126, and 127 each coordinate L-aspartate. N126 is an L-citrulline binding site. Residues R130, S181, S190, E266, and Y278 each contribute to the L-citrulline site.

The protein belongs to the argininosuccinate synthase family. Type 1 subfamily. In terms of assembly, homotetramer.

The protein localises to the cytoplasm. It carries out the reaction L-citrulline + L-aspartate + ATP = 2-(N(omega)-L-arginino)succinate + AMP + diphosphate + H(+). It participates in amino-acid biosynthesis; L-arginine biosynthesis; L-arginine from L-ornithine and carbamoyl phosphate: step 2/3. This Gluconacetobacter diazotrophicus (strain ATCC 49037 / DSM 5601 / CCUG 37298 / CIP 103539 / LMG 7603 / PAl5) protein is Argininosuccinate synthase.